We begin with the raw amino-acid sequence, 223 residues long: DNA mismatch repair protein MutH (223 aa).

It belongs to the MutH family.

Its subcellular location is the cytoplasm. Functionally, sequence-specific endonuclease that cleaves unmethylated GATC sequences. It is involved in DNA mismatch repair. In Shewanella oneidensis (strain ATCC 700550 / JCM 31522 / CIP 106686 / LMG 19005 / NCIMB 14063 / MR-1), this protein is DNA mismatch repair protein MutH.